The primary structure comprises 188 residues: MGIDINHKYDRKVRRTEPRSQDIYLRLLVKVYRFLARRTNSKFSRIILKRLFMSRINLPPISLARVCRFMKKESRKNSIAVVVGTITDDARIFEIPKLKVCALRITEKARGRILKAGGEIITFEKLAEISPTGNKTVLMQGRRNAREAVKHFGPAPGVPHSHTKPLVRSKGRKFERARGRRKSCGYKK.

The disordered stretch occupies residues 151–188; the sequence is HFGPAPGVPHSHTKPLVRSKGRKFERARGRRKSCGYKK. Basic residues-rich tracts occupy residues 161–171 and 178–188; these read SHTKPLVRSKG and RGRRKSCGYKK.

Belongs to the eukaryotic ribosomal protein eL18 family.

The protein localises to the cytoplasm. The protein is Large ribosomal subunit protein eL18 (RpL18) of Lysiphlebus testaceipes (Greenbugs aphid parastoid).